The sequence spans 464 residues: Protein FAM90A9 (464 aa).

Disordered regions lie at residues methionine 1–leucine 42, proline 70–alanine 389, and alanine 411–proline 437. Composition is skewed to basic and acidic residues over residues glycine 74 to valine 89 and asparagine 97 to arginine 114. Positions leucine 180–leucine 197 are enriched in low complexity.

This sequence belongs to the FAM90 family.

In Homo sapiens (Human), this protein is Protein FAM90A9 (FAM90A9).